The primary structure comprises 147 residues: Putative pre-16S rRNA nuclease (147 aa).

Belongs to the YqgF nuclease family.

The protein resides in the cytoplasm. Functionally, could be a nuclease involved in processing of the 5'-end of pre-16S rRNA. The polypeptide is Putative pre-16S rRNA nuclease (Ureaplasma parvum serovar 3 (strain ATCC 27815 / 27 / NCTC 11736)).